The following is a 1400-amino-acid chain: Clustered mitochondria protein homolog (1400 aa).

Disordered regions lie at residues 1–39 (MVSK…KEAS), 56–78 (GHDQ…QAED), and 212–243 (GDTG…KERP). Residues 56 to 69 (GHDQAEEADSKQDG) show a composition bias toward basic and acidic residues. Residues 380 to 622 (RAEDAYTSRL…RTFPPDLNFL (243 aa)) enclose the Clu domain. The disordered stretch occupies residues 684 to 741 (AALQDSNAAGAGSENKPLALESCDGTPDSPTSSESTLTPEDSEATTVSENSSAENQEA). Over residues 707-722 (DGTPDSPTSSESTLTP) the composition is skewed to low complexity. Polar residues predominate over residues 727 to 741 (ATTVSENSSAENQEA). 4 TPR repeats span residues 1088-1121 (AFHF…FNNV), 1130-1163 (CACL…SERV), 1172-1205 (IQEY…MLVV), and 1214-1247 (ALLD…NTKY). Positions 1377–1388 (QDSGKIQEQQGS) are enriched in polar residues. Residues 1377–1400 (QDSGKIQEQQGSHLELDDKLPVDD) are disordered. The span at 1390 to 1400 (LELDDKLPVDD) shows a compositional bias: basic and acidic residues.

The protein belongs to the CLU family.

The protein localises to the cytoplasm. Functionally, mRNA-binding protein involved in proper cytoplasmic distribution of mitochondria. The sequence is that of Clustered mitochondria protein homolog from Danio rerio (Zebrafish).